Reading from the N-terminus, the 430-residue chain is Probable folylpolyglutamate synthase (430 aa).

ATP is bound at residue 37–40 (GKET). Glu-132 is a binding site for Mg(2+). Asp-300 provides a ligand contact to ATP.

Belongs to the folylpolyglutamate synthase family.

It localises to the mitochondrion. The enzyme catalyses (6S)-5,6,7,8-tetrahydrofolyl-(gamma-L-Glu)(n) + L-glutamate + ATP = (6S)-5,6,7,8-tetrahydrofolyl-(gamma-L-Glu)(n+1) + ADP + phosphate + H(+). It participates in cofactor biosynthesis; tetrahydrofolylpolyglutamate biosynthesis. Its function is as follows. Conversion of folates to polyglutamate derivatives. The protein is Probable folylpolyglutamate synthase (RMA1) of Saccharomyces cerevisiae (strain ATCC 204508 / S288c) (Baker's yeast).